The chain runs to 33 residues: Brevinin-2DYa (33 aa).

Cys27 and Cys33 are oxidised to a cystine.

Expressed by the skin glands.

It is found in the secreted. Functionally, antimicrobial peptide. The protein is Brevinin-2DYa of Rana dybowskii (Dybovsky's frog).